The following is a 68-amino-acid chain: Small integral membrane protein 10-like protein 3 (68 aa).

This Homo sapiens (Human) protein is Small integral membrane protein 10-like protein 3.